The chain runs to 513 residues: MTHVINLDGEHLTLEDVIAVARHGATCEIDQEAKKAVEASRKIVDDIVREKRVVYGVTTGFGSLCNVSISPEDTTQLQENLIRTHASGFGDPLPEDAVRAIMLIRINSLVKGYSGIRLSTVEKLLELLNKGVVPFIPEKGSLGASGDLAPLAHMVLPMLGLGHAYYQGQLLSGQEALDKAGIEKIALAAKEGLALINGTTVLTGIGALATYDAIQLLKLSDVAGALSMEVHNGITSPFEEDLHTIRPQSGQLATARNIRNLLEGSGNTTVATQQRVQDPYTLRCIPQIHGASKDSIAYVKTKVEIEINSVTDNPIITKEGHVISGGNFHGEPMAQPFDFLGIAISEIGNVSERRVERLVNSQLSKLPSFLVKHPGLNSGFMITQYACASLASENKVLAHPASVDSIPSCENQEDFVSMGTTAARKAAEILKNSRRIVATEIMAACQALDLKPENHELGKGTKPAYDLFRQHVRFIEFDKDIEIYEELNKASELIESDEFLAAVENAVDLSIQF.

Positions 144–146 form a cross-link, 5-imidazolinone (Ala-Gly); it reads ASG. At Ser-145 the chain carries 2,3-didehydroalanine (Ser).

Belongs to the PAL/histidase family. Post-translationally, contains an active site 4-methylidene-imidazol-5-one (MIO), which is formed autocatalytically by cyclization and dehydration of residues Ala-Ser-Gly.

It is found in the cytoplasm. It catalyses the reaction L-histidine = trans-urocanate + NH4(+). It functions in the pathway amino-acid degradation; L-histidine degradation into L-glutamate; N-formimidoyl-L-glutamate from L-histidine: step 1/3. The polypeptide is Histidine ammonia-lyase (Streptococcus gordonii (strain Challis / ATCC 35105 / BCRC 15272 / CH1 / DL1 / V288)).